The primary structure comprises 697 residues: MERSTNARHSTLSSWTRESNTLSVLSKDVSLEDAKEYWKDCQADGKVDWIFEKLLNKLKILWQKIKDGSATNLEYVRAVILVNEAEQLEEDTETLHTDIQKENKVQENTDCAPERKEDSCADLNSDCETDVSGSECEHEDHSTVSPPATGAVCFGKHLCGPSCLSDINPSLLKKENPLNLPVSCDFQRWRVKTNGSEYPPHILYKAPCGRSLRDSDEVHSYLTETGCHFLGVDNFSFSTQVQLESHLSIKQEIVQDCDISNDVESVPVSLSNEIDDTRPTNFIYRKTSWPPGYSINNFTDIFVKCCSCTDGCLDISTCSCLQLTAQAFEKFTDSSLGIGPLGYKHKRLQEPVPTGLYECNLSCKCDRTLCQNRVVQHGLQLRLQVFKTDTKGWGVRCLDDVDNGTFVCIYAGRILIRTADSSVKTTLEDSVACGNEAKEDNGSTSTLMLSKRKRKPSHSDSEVTVMHLTPYSMRSLGLSVHRQSNTLSLTHLRSGGREISLEPFRRPKTKTSMLQKRRRQLIEEGACTVHNSSEEEGPTPPQSPKQKFNAGRKIHRNENSDETASGYVSEESSSSVISGGHPSEKPTCRTKSKLNKMTPHLSTSPEQTCEEDLHFLDASKEGNVGRFLNHSCCPNLFVQHVFVDTHQKSFPWVAFFTNSVVKAGTELTWDYNYVIGTAPDQEIQCLCGQQTCKHKIV.

Positions 172 to 242 (LKKENPLNLP…DNFSFSTQVQ (71 aa)) constitute an MBD domain. The 75-residue stretch at 304 to 378 (KCCSCTDGCL…LCQNRVVQHG (75 aa)) folds into the Pre-SET domain. Cys-306, Cys-308, Cys-312, Cys-318, Cys-320, Cys-359, Cys-363, Cys-365, and Cys-370 together coordinate Zn(2+). The region spanning 381–672 (LRLQVFKTDT…AGTELTWDYN (292 aa)) is the SET domain. 391 to 393 (KGW) serves as a coordination point for S-adenosyl-L-methionine. Disordered regions lie at residues 438–461 (KEDNGSTSTLMLSKRKRKPSHSDS) and 529–605 (VHNS…STSP). Over residues 565–581 (SGYVSEESSSSVISGGH) the composition is skewed to low complexity. S-adenosyl-L-methionine-binding positions include Arg-626 and 629-630 (NH). Cys-632, Cys-685, Cys-687, and Cys-692 together coordinate Zn(2+).

It belongs to the class V-like SAM-binding methyltransferase superfamily.

It localises to the nucleus. Its subcellular location is the chromosome. The enzyme catalyses N(6),N(6)-dimethyl-L-lysyl(9)-[histone H3] + S-adenosyl-L-methionine = N(6),N(6),N(6)-trimethyl-L-lysyl(9)-[histone H3] + S-adenosyl-L-homocysteine + H(+). In terms of biological role, histone methyltransferase involved in left-right axis specification in early development and mitosis. Specifically trimethylates 'Lys-9' of histone H3 (H3K9me3). H3K9me3 represents a specific tag for epigenetic transcriptional repression by recruiting HP1 (CBX1, CBX3 and/or CBX5) proteins to methylated histones. Contributes to H3K9me3 in both the interspersed repetitive elements and centromere-associated repeats. Plays a role in chromosome condensation and segregation during mitosis. This Xenopus tropicalis (Western clawed frog) protein is Histone-lysine N-methyltransferase SETDB2 (setdb2).